The chain runs to 411 residues: Argininosuccinate synthase (411 aa).

Ala-11–Ser-19 is an ATP binding site. An L-citrulline-binding site is contributed by Tyr-88. Residue Gly-118 coordinates ATP. L-aspartate is bound by residues Thr-120, Asn-124, and Asp-125. Asn-124 is an L-citrulline binding site. Arg-128, Ser-176, Glu-261, and Tyr-273 together coordinate L-citrulline.

This sequence belongs to the argininosuccinate synthase family. Type 1 subfamily. As to quaternary structure, homotetramer.

Its subcellular location is the cytoplasm. It carries out the reaction L-citrulline + L-aspartate + ATP = 2-(N(omega)-L-arginino)succinate + AMP + diphosphate + H(+). It functions in the pathway amino-acid biosynthesis; L-arginine biosynthesis; L-arginine from L-ornithine and carbamoyl phosphate: step 2/3. This Lactiplantibacillus plantarum (strain ATCC BAA-793 / NCIMB 8826 / WCFS1) (Lactobacillus plantarum) protein is Argininosuccinate synthase.